The primary structure comprises 665 residues: Lamin-A (665 aa).

An N-acetylmethionine modification is found at methionine 1. The segment at 1–29 (METPGQKRATRSTHTPLSPTRITRLQEKE) is head. Position 18 is a phosphoserine (serine 18). The IF rod domain maps to 27–383 (EKEDLQGLND…KLLEGEEERL (357 aa)). The interval 30–66 (DLQGLNDRLAVYIDKVRSLELENARLRLRITESEDVI) is coil 1A. The tract at residues 67-76 (SREVTGIKSA) is linker 1. Positions 77 to 214 (YETELADARK…SIYNEEMRET (138 aa)) are coil 1B. The segment at 215-238 (KRRHETRLVEVDNGRQREFESKLA) is linker 2. Residues 239-383 (DALHELRAQH…KLLEGEEERL (145 aa)) form a coil 2 region. 3 disordered regions span residues 381–441 (ERLR…SVEE), 550–581 (DDEDNDDMEHHHHHHHHHHDGQNSSGDPGEYN), and 602–641 (ASQGSGLVTGSSGSSSSSVTLTRTYRSTGGTSGGSGLGES). The tract at residues 384-664 (RLSPSPNTQK…AQVAPQNCSI (281 aa)) is tail. At serine 388 the chain carries Phosphoserine. A compositionally biased stretch (low complexity) spans 399–411 (IASHSGAHISSSA). The short motif at 413–418 (KRRRLE) is the Nuclear localization signal element. The 118-residue stretch at 425–542 (SSFTQHARTT…EEVAMRKLVR (118 aa)) folds into the LTD domain. Residues 427–436 (FTQHARTTGK) show a composition bias toward polar residues. Residues 605 to 630 (GSGLVTGSSGSSSSSVTLTRTYRSTG) are compositionally biased toward low complexity. Position 662 is a cysteine methyl ester (cysteine 662). Cysteine 662 carries S-farnesyl cysteine lipidation. Residues 663 to 665 (SIM) constitute a propeptide, removed in mature form.

The protein belongs to the intermediate filament family. As to quaternary structure, homodimer. Lamin dimers then assemble into dimeric head-to-tail polymers. Ultimately, two head-to-tail polymers assemble laterally into a protofilament with a uniformly shaped rod of 3.5 nm in diameter. In terms of processing, phosphorylation plays a key role in lamin organization, subcellular localization and nuclear envelope disintegration. Phosphorylation by CDK1 at Ser-18 at the onset of mitosis drives lamin disassembly and nuclear envelope breakdown.

It localises to the nucleus lamina. Its subcellular location is the nucleus envelope. It is found in the nucleus. The protein localises to the nucleoplasm. The protein resides in the nucleus matrix. Its function is as follows. Lamins are intermediate filament proteins that assemble into a filamentous meshwork, and which constitute the major components of the nuclear lamina, a fibrous layer on the nucleoplasmic side of the inner nuclear membrane. Lamins provide a framework for the nuclear envelope, bridging the nuclear envelope and chromatin, thereby playing an important role in nuclear assembly, chromatin organization, nuclear membrane and telomere dynamics. The structural integrity of the lamina is strictly controlled by the cell cycle, as seen by the disintegration and formation of the nuclear envelope in prophase and telophase, respectively. In Xenopus laevis (African clawed frog), this protein is Lamin-A (lmna).